Reading from the N-terminus, the 708-residue chain is Ribosomal RNA large subunit methyltransferase K/L (708 aa).

In terms of domain architecture, THUMP spans 43-154; sequence QIYRCCLWSR…KENALLGIDM (112 aa).

It belongs to the methyltransferase superfamily. RlmKL family.

It is found in the cytoplasm. It catalyses the reaction guanosine(2445) in 23S rRNA + S-adenosyl-L-methionine = N(2)-methylguanosine(2445) in 23S rRNA + S-adenosyl-L-homocysteine + H(+). The enzyme catalyses guanosine(2069) in 23S rRNA + S-adenosyl-L-methionine = N(2)-methylguanosine(2069) in 23S rRNA + S-adenosyl-L-homocysteine + H(+). Functionally, specifically methylates the guanine in position 2445 (m2G2445) and the guanine in position 2069 (m7G2069) of 23S rRNA. The protein is Ribosomal RNA large subunit methyltransferase K/L of Vibrio cholerae serotype O1 (strain ATCC 39541 / Classical Ogawa 395 / O395).